We begin with the raw amino-acid sequence, 360 residues long: Phospho-N-acetylmuramoyl-pentapeptide-transferase (360 aa).

The next 10 helical transmembrane spans lie at Tyr21–Gly41, Met74–Gly94, Tyr97–Tyr117, Tyr134–Met154, Ile168–Ser188, Gly199–Ser219, Ala236–Phe256, Val263–Leu283, Ile288–Val308, and Val338–Lys358.

The protein belongs to the glycosyltransferase 4 family. MraY subfamily. Mg(2+) serves as cofactor.

The protein resides in the cell inner membrane. The enzyme catalyses UDP-N-acetyl-alpha-D-muramoyl-L-alanyl-gamma-D-glutamyl-meso-2,6-diaminopimeloyl-D-alanyl-D-alanine + di-trans,octa-cis-undecaprenyl phosphate = di-trans,octa-cis-undecaprenyl diphospho-N-acetyl-alpha-D-muramoyl-L-alanyl-D-glutamyl-meso-2,6-diaminopimeloyl-D-alanyl-D-alanine + UMP. The protein operates within cell wall biogenesis; peptidoglycan biosynthesis. In terms of biological role, catalyzes the initial step of the lipid cycle reactions in the biosynthesis of the cell wall peptidoglycan: transfers peptidoglycan precursor phospho-MurNAc-pentapeptide from UDP-MurNAc-pentapeptide onto the lipid carrier undecaprenyl phosphate, yielding undecaprenyl-pyrophosphoryl-MurNAc-pentapeptide, known as lipid I. In Shewanella woodyi (strain ATCC 51908 / MS32), this protein is Phospho-N-acetylmuramoyl-pentapeptide-transferase.